Here is a 552-residue protein sequence, read N- to C-terminus: CTP synthase (552 aa).

The segment at 1-270 (MTKYVFVTGG…DRIICEELKL (270 aa)) is amidoligase domain. S13 is a CTP binding site. S13 contacts UTP. ATP contacts are provided by residues 14–19 (SLGKGI) and D71. Positions 71 and 144 each coordinate Mg(2+). CTP is bound by residues 151–153 (DIE), 191–196 (KTKPTQ), and K227. Residues 191–196 (KTKPTQ) and K227 each bind UTP. Residues 295–547 (TIGMVGKYVD…VEAALANKQA (253 aa)) enclose the Glutamine amidotransferase type-1 domain. G356 contributes to the L-glutamine binding site. C383 serves as the catalytic Nucleophile; for glutamine hydrolysis. L-glutamine-binding positions include 384–387 (LGMQ), E407, and R473. Residues H520 and E522 contribute to the active site.

This sequence belongs to the CTP synthase family. Homotetramer.

It catalyses the reaction UTP + L-glutamine + ATP + H2O = CTP + L-glutamate + ADP + phosphate + 2 H(+). The enzyme catalyses L-glutamine + H2O = L-glutamate + NH4(+). It carries out the reaction UTP + NH4(+) + ATP = CTP + ADP + phosphate + 2 H(+). It functions in the pathway pyrimidine metabolism; CTP biosynthesis via de novo pathway; CTP from UDP: step 2/2. Allosterically activated by GTP, when glutamine is the substrate; GTP has no effect on the reaction when ammonia is the substrate. The allosteric effector GTP functions by stabilizing the protein conformation that binds the tetrahedral intermediate(s) formed during glutamine hydrolysis. Inhibited by the product CTP, via allosteric rather than competitive inhibition. Its function is as follows. Catalyzes the ATP-dependent amination of UTP to CTP with either L-glutamine or ammonia as the source of nitrogen. Regulates intracellular CTP levels through interactions with the four ribonucleotide triphosphates. The chain is CTP synthase from Burkholderia ambifaria (strain MC40-6).